Here is a 260-residue protein sequence, read N- to C-terminus: Small ribosomal subunit protein uS2 (260 aa).

It belongs to the universal ribosomal protein uS2 family.

This is Small ribosomal subunit protein uS2 from Streptococcus sanguinis (strain SK36).